The primary structure comprises 228 residues: L-ribulose-5-phosphate 4-epimerase UlaF (228 aa).

Substrate-binding positions include glycine 26–asparagine 27, serine 43–glycine 44, and serine 72–serine 73. Zn(2+)-binding residues include aspartate 74, histidine 93, and histidine 95. Residue aspartate 118 is the Proton donor/acceptor of the active site. Histidine 167 serves as a coordination point for Zn(2+). Residue tyrosine 225 is the Proton donor/acceptor of the active site.

This sequence belongs to the aldolase class II family. AraD/FucA subfamily. It depends on Zn(2+) as a cofactor.

It carries out the reaction L-ribulose 5-phosphate = D-xylulose 5-phosphate. It participates in cofactor degradation; L-ascorbate degradation; D-xylulose 5-phosphate from L-ascorbate: step 4/4. In terms of biological role, catalyzes the isomerization of L-ribulose 5-phosphate to D-xylulose 5-phosphate. Is involved in the anaerobic L-ascorbate utilization. This is L-ribulose-5-phosphate 4-epimerase UlaF from Escherichia coli O17:K52:H18 (strain UMN026 / ExPEC).